The chain runs to 127 residues: MPTINQLVRKGRKQVIKKSKSPALVSCPQRRGVCTRVYTTTPKKPNSALRKVAKVRLTSGYEVISYIPGEGHNLQEHSIVLVRGGRVKDLPGVKYHIVRGALDTAGVKGRVHSRSKYGTKKADAGKK.

The residue at position 89 (D89) is a 3-methylthioaspartic acid.

The protein belongs to the universal ribosomal protein uS12 family. As to quaternary structure, part of the 30S ribosomal subunit. Contacts proteins S8 and S17. May interact with IF1 in the 30S initiation complex.

Its function is as follows. With S4 and S5 plays an important role in translational accuracy. In terms of biological role, interacts with and stabilizes bases of the 16S rRNA that are involved in tRNA selection in the A site and with the mRNA backbone. Located at the interface of the 30S and 50S subunits, it traverses the body of the 30S subunit contacting proteins on the other side and probably holding the rRNA structure together. The combined cluster of proteins S8, S12 and S17 appears to hold together the shoulder and platform of the 30S subunit. This is Small ribosomal subunit protein uS12 from Nautilia profundicola (strain ATCC BAA-1463 / DSM 18972 / AmH).